A 430-amino-acid chain; its full sequence is Lipoyl synthase, mitochondrial (430 aa).

A mitochondrion-targeting transit peptide spans 1–37 (MATSAGKLRTLYSAHSSLSSLPPSARPTLQLATLRSY). Over residues 39 to 55 (TTTPHDSPIGNTSNTPP) the composition is skewed to polar residues. Positions 39 to 59 (TTTPHDSPIGNTSNTPPTVKR) are disordered. Positions 141, 146, 152, 172, 176, 179, and 387 each coordinate [4Fe-4S] cluster. Residues 155 to 376 (GSSKSAATAT…KERALEMGFL (222 aa)) form the Radical SAM core domain.

The protein belongs to the radical SAM superfamily. Lipoyl synthase family. The cofactor is [4Fe-4S] cluster.

It localises to the mitochondrion. It catalyses the reaction [[Fe-S] cluster scaffold protein carrying a second [4Fe-4S](2+) cluster] + N(6)-octanoyl-L-lysyl-[protein] + 2 oxidized [2Fe-2S]-[ferredoxin] + 2 S-adenosyl-L-methionine + 4 H(+) = [[Fe-S] cluster scaffold protein] + N(6)-[(R)-dihydrolipoyl]-L-lysyl-[protein] + 4 Fe(3+) + 2 hydrogen sulfide + 2 5'-deoxyadenosine + 2 L-methionine + 2 reduced [2Fe-2S]-[ferredoxin]. Its pathway is protein modification; protein lipoylation via endogenous pathway; protein N(6)-(lipoyl)lysine from octanoyl-[acyl-carrier-protein]: step 2/2. Catalyzes the radical-mediated insertion of two sulfur atoms into the C-6 and C-8 positions of the octanoyl moiety bound to the lipoyl domains of lipoate-dependent enzymes, thereby converting the octanoylated domains into lipoylated derivatives. In Ajellomyces capsulatus (strain H143) (Darling's disease fungus), this protein is Lipoyl synthase, mitochondrial.